Reading from the N-terminus, the 338-residue chain is Phosphate acyltransferase (338 aa).

Belongs to the PlsX family. Homodimer. Probably interacts with PlsY.

It is found in the cytoplasm. It catalyses the reaction a fatty acyl-[ACP] + phosphate = an acyl phosphate + holo-[ACP]. The protein operates within lipid metabolism; phospholipid metabolism. Catalyzes the reversible formation of acyl-phosphate (acyl-PO(4)) from acyl-[acyl-carrier-protein] (acyl-ACP). This enzyme utilizes acyl-ACP as fatty acyl donor, but not acyl-CoA. The chain is Phosphate acyltransferase from Gloeobacter violaceus (strain ATCC 29082 / PCC 7421).